The chain runs to 661 residues: uncharacterized protein (661 aa).

Residues 25 to 52 form a disordered region; that stretch reads LLPSEPPVGDMNNEDSDTNTSITQSPTN. The span at 42-52 shows a compositional bias: polar residues; sequence TNTSITQSPTN. Positions 246–297 constitute an SANT domain; sequence SMPDIWNEEQHSIFVQQFILHGKKFGKIAEAVPGKNSKECVLHYYLTKRTTD. Disordered stretches follow at residues 306–329, 478–499, 548–570, and 604–633; these read TKTKGRRRKKLLPSQRGGKKKSKG, YYEPKLEQHSSSKRNSISTRKE, PMKMPLTPRRASTGPRPRPTFQL, and RIDELSVEDQEHTTHSSHTTSDINAFPNSQ. Residues 308–328 show a composition bias toward basic residues; that stretch reads TKGRRRKKLLPSQRGGKKKSK. Residues 478–487 show a composition bias toward basic and acidic residues; the sequence is YYEPKLEQHS. Over residues 604 to 617 the composition is skewed to basic and acidic residues; it reads RIDELSVEDQEHTT.

It localises to the nucleus. This is an uncharacterized protein from Schizosaccharomyces pombe (strain 972 / ATCC 24843) (Fission yeast).